The primary structure comprises 299 residues: MRIIFMGSPGFAVGALNLLLKLQSEVVAVYTKAPKPSGRRQRLTKSPVHIVAEKSDIEVCTPASLKSSIEQEKFGNFKPDVAVVAAYGLILPKEILNIPKYGCINIHPSLLPRWRGAAPIQHTILAGDQETGVSIMQLDEGLDSGPILKQKKFLIEKSDNYKTLYDKLSELGSDLLLKVLNEIEKQVPLKQSDNDACYADKVKDYKIYASDACEIAYRKVKAFYPKAFIKVENKRIKILDAEFEAFTSGQGEIINDNMHISLKGGTLIPKVVQMEGRNPCDIKDFVRGLKSSLTKKFIE.

109-112 (SLLP) is a binding site for (6S)-5,6,7,8-tetrahydrofolate.

This sequence belongs to the Fmt family.

It catalyses the reaction L-methionyl-tRNA(fMet) + (6R)-10-formyltetrahydrofolate = N-formyl-L-methionyl-tRNA(fMet) + (6S)-5,6,7,8-tetrahydrofolate + H(+). Functionally, attaches a formyl group to the free amino group of methionyl-tRNA(fMet). The formyl group appears to play a dual role in the initiator identity of N-formylmethionyl-tRNA by promoting its recognition by IF2 and preventing the misappropriation of this tRNA by the elongation apparatus. The sequence is that of Methionyl-tRNA formyltransferase from Wolbachia pipientis subsp. Culex pipiens (strain wPip).